A 180-amino-acid chain; its full sequence is MSEPELQLVARRIRSFPDFPVQGVLFRDISPLLKDPVSFRASIHLLASHLKSTHSGKIDYIAGLDSRGFLFGPSLAQELGVGCVLIRKRGKLPGPTLSASYALEYGKAELEIQKDALEPGQRVVIVDDLLATGGTMCAACELLNQLRAEVVECVSLVELTSLKGRERLGPIPYFSLLQYE.

Position 2 is an N-acetylserine (Ser2). A phosphoserine mark is found at Ser15 and Ser30. Tyr60 is subject to Phosphotyrosine. Ser66 is subject to Phosphoserine. Lys114 bears the N6-acetyllysine mark. Thr135 carries the post-translational modification Phosphothreonine.

It belongs to the purine/pyrimidine phosphoribosyltransferase family. In terms of assembly, homodimer.

The protein resides in the cytoplasm. The catalysed reaction is AMP + diphosphate = 5-phospho-alpha-D-ribose 1-diphosphate + adenine. Its pathway is purine metabolism; AMP biosynthesis via salvage pathway; AMP from adenine: step 1/1. Its function is as follows. Catalyzes a salvage reaction resulting in the formation of AMP, that is energically less costly than de novo synthesis. This is Adenine phosphoribosyltransferase from Stochomys longicaudatus (Target rat).